A 481-amino-acid chain; its full sequence is Argininosuccinate lyase (481 aa).

A compositionally biased stretch (polar residues) spans Met1 to Glu17. Positions Met1–Trp25 are disordered.

Belongs to the lyase 1 family. Argininosuccinate lyase subfamily.

It localises to the cytoplasm. The enzyme catalyses 2-(N(omega)-L-arginino)succinate = fumarate + L-arginine. It functions in the pathway amino-acid biosynthesis; L-arginine biosynthesis; L-arginine from L-ornithine and carbamoyl phosphate: step 3/3. The sequence is that of Argininosuccinate lyase from Gluconobacter oxydans (strain 621H) (Gluconobacter suboxydans).